The following is a 319-amino-acid chain: tRNA (guanine(9)-N(1))-methyltransferase Trmt10A (319 aa).

Disordered stretches follow at residues 16-87 (LSLN…KRQL) and 275-319 (AKIT…SLDS). The segment covering 17 to 33 (SLNNCPGTTPGTPMSKN) has biased composition (polar residues). Residues 35 to 42 (LKKQRKLA) carry the Nuclear localization signal motif. Basic and acidic residues-rich tracts occupy residues 40–58 (KLAE…EREK), 78–87 (SRKELKKRQL), and 276–302 (KITD…ESDK). The stretch at 44-67 (FAELRKLRREREREKKKQKRREAK) forms a coiled coil. The 192-residue stretch at 83–274 (KKRQLADGGK…ETIPMRKGAK (192 aa)) folds into the SAM-dependent MTase TRM10-type domain.

The protein belongs to the class IV-like SAM-binding methyltransferase superfamily. TRM10 family.

It is found in the nucleus. The protein resides in the nucleolus. Its subcellular location is the chromosome. It carries out the reaction guanosine(9) in tRNA + S-adenosyl-L-methionine = N(1)-methylguanosine(9) in tRNA + S-adenosyl-L-homocysteine + H(+). S-adenosyl-L-methionine-dependent guanine N(1)-methyltransferase that catalyzes the formation of N(1)-methylguanine at position 9 (m1G9) in tRNAs. Modulates Mettl3-mediated N6-methyladenosine (m6A) methylation of mRNA 5'-UTRs and 3'-UTRs independent of its methyltransferase activity; influences mRNA stability and protein levels, in particular of Hsp70 chaperone proteins and other stress response proteins. Also regulates stability of transcripts encoding proteins involved in signaling processes and proteins involved in neurogenesis and axon guidance pathways. This is tRNA (guanine(9)-N(1))-methyltransferase Trmt10A from Drosophila melanogaster (Fruit fly).